The chain runs to 30 residues: Cycloviolacin-O1 (30 aa).

Residues 1–30 (GIPCAESCVYIPCTVTALLGCSCSNRVCYN) constitute a cross-link (cyclopeptide (Gly-Asn)). Cystine bridges form between Cys-4–Cys-21, Cys-8–Cys-23, and Cys-13–Cys-28.

This is a cyclic peptide. Expressed in leaves, petals, petioles and roots but not in runners (at protein level).

Functionally, probably participates in a plant defense mechanism. This Viola odorata (Sweet violet) protein is Cycloviolacin-O1.